Here is a 155-residue protein sequence, read N- to C-terminus: Small ribosomal subunit protein mS86 (155 aa).

The transit peptide at 1 to 27 (MHYMGLFSRAGNIFRQPRALQASNAML) directs the protein to the mitochondrion. The 79-residue stretch at 36 to 114 (SKIFVGGLSP…RIIGVHPADS (79 aa)) folds into the RRM domain.

Belongs to the GR-RBP family. Component of the mitochondrial ribosome small subunit.

It localises to the mitochondrion. In terms of biological role, possibly has a role in RNA transcription or processing during stress. This is Small ribosomal subunit protein mS86 (RBG6) from Arabidopsis thaliana (Mouse-ear cress).